Reading from the N-terminus, the 231-residue chain is UPF0758 protein YsxA (231 aa).

Residues 109 to 231 enclose the MPN domain; it reads VIRSPEDGAN…FVSLKEKGYL (123 aa). Residues histidine 180, histidine 182, and aspartate 193 each contribute to the Zn(2+) site. A JAMM motif motif is present at residues 180 to 193; that stretch reads HNHPSGDPTPSRED.

Belongs to the UPF0758 family.

The sequence is that of UPF0758 protein YsxA (ysxA) from Bacillus subtilis (strain 168).